The following is a 221-amino-acid chain: Histone H1.3 (221 aa).

The segment covering 1–17 (MSETAPAAPAAPAPVEK) has biased composition (low complexity). Residues 1–42 (MSETAPAAPAAPAPVEKTPVKKKAKKTGAAAGKRKASGPPVS) are disordered. Serine 2 carries the post-translational modification N-acetylserine. At serine 2 the chain carries Phosphoserine. Lysine 17 carries the N6-acetyllysine modification. The residue at position 18 (threonine 18) is a Phosphothreonine. Positions 20–36 (VKKKAKKTGAAAGKRKA) are enriched in basic residues. An N6-(beta-hydroxybutyryl)lysine mark is found at lysine 33, lysine 35, and lysine 53. Residues 37-110 (SGPPVSELIT…GASGSFKLNK (74 aa)) enclose the H15 domain. Residue arginine 55 is modified to Citrulline. 3 positions are modified to N6-(beta-hydroxybutyryl)lysine: lysine 65, lysine 86, and lysine 91. The disordered stretch occupies residues 92–221 (GTLVQTKGTG…KAKKAAPRKK (130 aa)). Serine 105 bears the Phosphoserine; by PKC mark. An N6-(beta-hydroxybutyryl)lysine mark is found at lysine 107 and lysine 141. 4 stretches are compositionally biased toward basic residues: residues 120-141 (KAKK…KPKK), 150-161 (KTAKKTPKKAKK), 170-187 (KVSK…KKAA), and 194-221 (KAPK…PRKK).

It belongs to the histone H1/H5 family. In terms of processing, H1 histones are progressively phosphorylated during the cell cycle, becoming maximally phosphorylated during late G2 phase and M phase, and being dephosphorylated sharply thereafter. Post-translationally, hydroxybutyrylation of histones is induced by starvation. Citrullination at Arg-55 (H1R54ci) by PADI4 takes place within the DNA-binding site of H1 and results in its displacement from chromatin and global chromatin decondensation, thereby promoting pluripotency and stem cell maintenance.

The protein localises to the nucleus. It is found in the chromosome. Functionally, histone H1 protein binds to linker DNA between nucleosomes forming the macromolecular structure known as the chromatin fiber. Histones H1 are necessary for the condensation of nucleosome chains into higher-order structured fibers. Also acts as a regulator of individual gene transcription through chromatin remodeling, nucleosome spacing and DNA methylation. The protein is Histone H1.3 of Mus musculus (Mouse).